Consider the following 376-residue polypeptide: TATA box-binding protein-like 2 (376 aa).

The tract at residues 103–184 (PDEVTQENKD…SDSLSLASIT (82 aa)) is disordered. The span at 108 to 122 (QENKDQPVISKHETE) shows a compositional bias: basic and acidic residues. The segment covering 126-159 (ESQSPQSRLPSPSEQDVGLGLNSSSLSNSHSQLH) has biased composition (low complexity). The span at 175–184 (SDSLSLASIT) shows a compositional bias: polar residues.

The protein belongs to the TBP family. Interacts with TAF3.

Its subcellular location is the cytoplasm. It localises to the nucleus. Functionally, transcription factor required in complex with TAF3 for the differentiation of myoblasts into myocytes. The complex replaces TFIID at specific promoters at an early stage in the differentiation process. In Pan troglodytes (Chimpanzee), this protein is TATA box-binding protein-like 2.